Consider the following 434-residue polypeptide: ATP-dependent protease ATPase subunit HslU (434 aa).

Residues valine 18, 60–65, aspartate 247, glutamate 312, and arginine 384 contribute to the ATP site; that span reads GVGKTE.

Belongs to the ClpX chaperone family. HslU subfamily. In terms of assembly, a double ring-shaped homohexamer of HslV is capped on each side by a ring-shaped HslU homohexamer. The assembly of the HslU/HslV complex is dependent on binding of ATP.

The protein resides in the cytoplasm. Its function is as follows. ATPase subunit of a proteasome-like degradation complex; this subunit has chaperone activity. The binding of ATP and its subsequent hydrolysis by HslU are essential for unfolding of protein substrates subsequently hydrolyzed by HslV. HslU recognizes the N-terminal part of its protein substrates and unfolds these before they are guided to HslV for hydrolysis. This Bradyrhizobium sp. (strain ORS 278) protein is ATP-dependent protease ATPase subunit HslU.